The sequence spans 112 residues: Divalent-cation tolerance protein CutA (112 aa).

3 residues coordinate Cu cation: C16, H83, and H84.

Belongs to the CutA family. Homotrimer. Requires Cu cation as cofactor.

Its subcellular location is the cytoplasm. Involved in resistance toward heavy metals. This is Divalent-cation tolerance protein CutA from Escherichia coli O81 (strain ED1a).